The following is a 666-amino-acid chain: Probable potassium transport system protein Kup (666 aa).

12 helical membrane-spanning segments follow: residues 16–36, 58–78, 99–119, 141–161, 167–187, 221–241, 253–273, 292–312, 343–363, 373–393, 402–422, and 424–444; these read GFII…LYTM, ISLI…LVAL, TPWL…DGAL, IFQN…LLFA, TGVI…FLGI, IFIL…YSDL, WPFV…WILA, FTMH…QALI, TYIP…VLLF, YGLA…FFLI, VLLM…ASAV, and FMHG…IMII.

This sequence belongs to the HAK/KUP transporter (TC 2.A.72) family.

It localises to the cell membrane. It carries out the reaction K(+)(in) + H(+)(in) = K(+)(out) + H(+)(out). In terms of biological role, transport of potassium into the cell. Likely operates as a K(+):H(+) symporter. This is Probable potassium transport system protein Kup from Streptococcus agalactiae serotype III (strain NEM316).